The primary structure comprises 454 residues: T-box protein VegT (454 aa).

A DNA-binding region (T-box) is located at residues 57–230 (LWSQFHQEGT…HNPFAKGFRE (174 aa)). Over residues 229–241 (REQERSHKRDDVL) the composition is skewed to basic and acidic residues. Disordered regions lie at residues 229-274 (REQE…ATRV) and 295-358 (ANQG…VPDS). Residues 308 to 325 (GVNQEQQVPTSSLNFYNK) are compositionally biased toward polar residues.

Forms a repression complex on the promoters of the nodal/nr1 and siamois genes with the maternal factors tcf7l1/tcf3 and pouf5.1/oct-25. Interacts (via C-terminus) with tcf7l1/tcf3 (via N-terminus). Also interacts with the other POU-domain transcription factors pou5f1.2/oct-91 and pou5f1.3/oct-60.

Its subcellular location is the nucleus. In terms of biological role, transcription factor required for both mesoderm and endoderm formation in the embryo; signaling determinants and concentration levels may determine which germ layer is formed. Acts together with beta-catenin to activate genes that are responsible for mesoderm induction including wnt-8, eomes t/bra, siamois, mix1 and sox17. Directly binds to promoter DNA. Patterns the mesoderm along the dorsoventral and posterior axis. Activates siamois gene transcription when alone or in combination with beta-catenin, but inhibits siamois transcription in combination with pou5f1.1/oct-25. The protein is T-box protein VegT of Xenopus borealis (Kenyan clawed frog).